The chain runs to 410 residues: Peptidase T (410 aa).

A Zn(2+)-binding site is contributed by His-79. Asp-81 is a catalytic residue. Asp-142 is a Zn(2+) binding site. Glu-176 functions as the Proton acceptor in the catalytic mechanism. 3 residues coordinate Zn(2+): Glu-177, Asp-199, and His-381.

This sequence belongs to the peptidase M20B family. Requires Zn(2+) as cofactor.

Its subcellular location is the cytoplasm. The enzyme catalyses Release of the N-terminal residue from a tripeptide.. Its function is as follows. Cleaves the N-terminal amino acid of tripeptides. The protein is Peptidase T of Listeria monocytogenes serotype 4a (strain HCC23).